The primary structure comprises 158 residues: Secreted frizzled-related protein 1 (158 aa).

The FZ domain maps to 1-34 (VRDSCEPVMQFFGFYWPEMLKCDKFPEGDVCIAM). The N-linked (GlcNAc...) asparagine glycan is linked to asparagine 38. Disulfide bonds link cysteine 51–cysteine 121 and cysteine 68–cysteine 123. Residues 51–158 (CPPCDNELKS…IHKWDKKNKE (108 aa)) enclose the NTR domain.

Belongs to the secreted frizzled-related protein (sFRP) family. As to quaternary structure, interacts with WNT4, WNT1, WNT2, WNT8, MYOC and FRZD6.

It is found in the secreted. Functionally, soluble frizzled-related proteins (sFRPS) function as modulators of Wnt signaling through direct interaction with Wnts. They have a role in regulating cell growth and differentiation in specific cell types. SFRP1 decreases intracellular beta-catenin levels. Has antiproliferative effects on vascular cells, in vitro and in vivo, and can induce, in vivo, an angiogenic response. In vascular cell cycle, delays the G1 phase and entry into the S phase. In kidney development, inhibits tubule formation and bud growth in metanephroi. Inhibits WNT1/WNT4-mediated TCF-dependent transcription. In Rattus norvegicus (Rat), this protein is Secreted frizzled-related protein 1 (Sfrp1).